Here is a 217-residue protein sequence, read N- to C-terminus: Transmembrane protein 253 (217 aa).

4 helical membrane passes run 33–53 (LVLAVSQLWLAVVVVPLAVSV), 62–82 (MATALPLGPGASGLLTGTVTL), 96–116 (MMIFNTFNLILGFIVVVVEVM), and 138–158 (LSAEAFTLGGVLVSVHALFLL). The disordered stretch occupies residues 187–217 (PGLENGPTVASTGANERVGQREQTRAALLPP).

Its subcellular location is the membrane. This is Transmembrane protein 253 (TMEM253) from Homo sapiens (Human).